Reading from the N-terminus, the 143-residue chain is Ribosome-binding factor A (143 aa).

Residues 116 to 128 (SDDEAKQKQHGDQ) are compositionally biased toward basic and acidic residues. A disordered region spans residues 116-143 (SDDEAKQKQHGDQQDVSQSSDDKSEGED).

This sequence belongs to the RbfA family. Monomer. Binds 30S ribosomal subunits, but not 50S ribosomal subunits or 70S ribosomes.

It is found in the cytoplasm. Functionally, one of several proteins that assist in the late maturation steps of the functional core of the 30S ribosomal subunit. Associates with free 30S ribosomal subunits (but not with 30S subunits that are part of 70S ribosomes or polysomes). Required for efficient processing of 16S rRNA. May interact with the 5'-terminal helix region of 16S rRNA. The sequence is that of Ribosome-binding factor A from Shewanella sediminis (strain HAW-EB3).